The following is a 422-amino-acid chain: F-box/kelch-repeat protein At3g27150 (422 aa).

In terms of domain architecture, F-box spans 68 to 114; that stretch reads LLNVPQLVYELEVEILARVPRFEYWKLKLLNKGFSRLLKSDEIFKVR. Kelch repeat units lie at residues 162-212, 213-264, 266-312, 314-361, and 366-412; these read ESLC…TCGT, VVFV…YLRG, FYVL…SPPL, AVVG…VAFK, and KLLV…RFNH.

The sequence is that of F-box/kelch-repeat protein At3g27150 from Arabidopsis thaliana (Mouse-ear cress).